The following is a 147-amino-acid chain: Bis(5'-nucleosyl)-tetraphosphatase [asymmetrical] (147 aa).

Position 2 is an N-acetylalanine (A2). Residues 2–139 (ALRACGLIIF…DMKAVLQEGH (138 aa)) enclose the Nudix hydrolase domain. The short motif at 43–64 (GHVEPGESDLQTALRETQEEAG) is the Nudix box element.

It belongs to the Nudix hydrolase family. A divalent metal cation serves as cofactor.

The enzyme catalyses P(1),P(4)-bis(5'-guanosyl) tetraphosphate + H2O = GMP + GTP + 2 H(+). The catalysed reaction is a 5'-end CoA-ribonucleoside in mRNA + H2O = a 5'-end phospho-adenosine-phospho-ribonucleoside in mRNA + (R)-4'-phosphopantetheine + 2 H(+). It catalyses the reaction a 5'-end FAD-phospho-ribonucleoside in mRNA + H2O = a 5'-end phospho-adenosine-phospho-ribonucleoside in mRNA + FMN + 2 H(+). Its activity is regulated as follows. Inhibited by fluoride ions. Functionally, catalyzes the asymmetric hydrolysis of diadenosine 5',5'''-P1,P4-tetraphosphate (Ap4A) to yield AMP and ATP. Exhibits decapping activity towards FAD-capped RNAs and dpCoA-capped RNAs in vitro. The protein is Bis(5'-nucleosyl)-tetraphosphatase [asymmetrical] (NUDT2) of Sus scrofa (Pig).